The primary structure comprises 360 residues: Ribosomal RNA large subunit methyltransferase M (360 aa).

S-adenosyl-L-methionine-binding positions include Ser187, 220–223 (CPGG), Asp239, Asp259, and Asp276. Lys305 acts as the Proton acceptor in catalysis.

This sequence belongs to the class I-like SAM-binding methyltransferase superfamily. RNA methyltransferase RlmE family. RlmM subfamily. In terms of assembly, monomer.

The protein resides in the cytoplasm. The enzyme catalyses cytidine(2498) in 23S rRNA + S-adenosyl-L-methionine = 2'-O-methylcytidine(2498) in 23S rRNA + S-adenosyl-L-homocysteine + H(+). Functionally, catalyzes the 2'-O-methylation at nucleotide C2498 in 23S rRNA. The chain is Ribosomal RNA large subunit methyltransferase M from Shewanella sediminis (strain HAW-EB3).